The sequence spans 266 residues: Undecaprenyl-diphosphatase (266 aa).

A run of 8 helical transmembrane segments spans residues leucine 4–serine 24, glycine 41–tyrosine 61, alanine 79–valine 99, leucine 108–isoleucine 128, methionine 143–valine 163, alanine 184–tryptophan 204, isoleucine 220–valine 240, and phenylalanine 243–leucine 263.

The protein belongs to the UppP family.

It localises to the cell inner membrane. The enzyme catalyses di-trans,octa-cis-undecaprenyl diphosphate + H2O = di-trans,octa-cis-undecaprenyl phosphate + phosphate + H(+). Catalyzes the dephosphorylation of undecaprenyl diphosphate (UPP). Confers resistance to bacitracin. The chain is Undecaprenyl-diphosphatase from Sphingopyxis alaskensis (strain DSM 13593 / LMG 18877 / RB2256) (Sphingomonas alaskensis).